The primary structure comprises 107 residues: Phosphoribosyl-ATP pyrophosphatase (107 aa).

It belongs to the PRA-PH family.

Its subcellular location is the cytoplasm. It catalyses the reaction 1-(5-phospho-beta-D-ribosyl)-ATP + H2O = 1-(5-phospho-beta-D-ribosyl)-5'-AMP + diphosphate + H(+). The protein operates within amino-acid biosynthesis; L-histidine biosynthesis; L-histidine from 5-phospho-alpha-D-ribose 1-diphosphate: step 2/9. The chain is Phosphoribosyl-ATP pyrophosphatase from Bacillus thuringiensis (strain Al Hakam).